Consider the following 53-residue polypeptide: Tryptophan RNA-binding attenuator protein inhibitory protein (53 aa).

CXXCXGXG motif repeat units lie at residues 12-19 (CPKCERAG) and 26-33 (CPACSGKG).

Homopentamer or homohexamer.

The protein localises to the cytoplasm. In terms of biological role, by forming a complex with tryptophan-activated TRAP, and masking its RNA binding site, it inhibits TRAP's RNA binding ability, thereby abolishing TRAP regulation of gene expression, leading to antitermination and increased trp operon expression. AT acts by competing with messenger RNA for the RNA binding domain of TRAP. The sequence is that of Tryptophan RNA-binding attenuator protein inhibitory protein (rtpA) from Bacillus subtilis (strain 168).